A 1400-amino-acid chain; its full sequence is DNA-directed RNA polymerase subunit beta' (1400 aa).

Zn(2+)-binding residues include C71, C73, C86, and C89. Residues D462, D464, and D466 each coordinate Mg(2+). Zn(2+) contacts are provided by C820, C893, C900, and C903.

The protein belongs to the RNA polymerase beta' chain family. As to quaternary structure, the RNAP catalytic core consists of 2 alpha, 1 beta, 1 beta' and 1 omega subunit. When a sigma factor is associated with the core the holoenzyme is formed, which can initiate transcription. Requires Mg(2+) as cofactor. Zn(2+) serves as cofactor.

It carries out the reaction RNA(n) + a ribonucleoside 5'-triphosphate = RNA(n+1) + diphosphate. In terms of biological role, DNA-dependent RNA polymerase catalyzes the transcription of DNA into RNA using the four ribonucleoside triphosphates as substrates. The chain is DNA-directed RNA polymerase subunit beta' from Methylobacterium sp. (strain 4-46).